The primary structure comprises 155 residues: Small ribosomal subunit protein uS7 (155 aa).

This sequence belongs to the universal ribosomal protein uS7 family. In terms of assembly, part of the 30S ribosomal subunit. Contacts proteins S9 and S11.

One of the primary rRNA binding proteins, it binds directly to 16S rRNA where it nucleates assembly of the head domain of the 30S subunit. Is located at the subunit interface close to the decoding center, probably blocks exit of the E-site tRNA. This chain is Small ribosomal subunit protein uS7, found in Petrotoga mobilis (strain DSM 10674 / SJ95).